The chain runs to 207 residues: LexA repressor (207 aa).

The segment at residues Val-28–Ser-48 is a DNA-binding region (H-T-H motif). Active-site for autocatalytic cleavage activity residues include Ser-130 and Lys-168.

The protein belongs to the peptidase S24 family. In terms of assembly, homodimer.

The enzyme catalyses Hydrolysis of Ala-|-Gly bond in repressor LexA.. Its function is as follows. Represses a number of genes involved in the response to DNA damage (SOS response), including recA and lexA. In the presence of single-stranded DNA, RecA interacts with LexA causing an autocatalytic cleavage which disrupts the DNA-binding part of LexA, leading to derepression of the SOS regulon and eventually DNA repair. In Staphylococcus aureus (strain Mu3 / ATCC 700698), this protein is LexA repressor.